Consider the following 233-residue polypeptide: Orotidine 5'-phosphate decarboxylase (233 aa).

Residues Asp11, Lys33, 60 to 69, Thr120, Arg181, Gln190, Gly210, and Arg211 each bind substrate; that span reads DLKFHDIPNT. Lys62 acts as the Proton donor in catalysis.

The protein belongs to the OMP decarboxylase family. Type 1 subfamily. Homodimer.

The enzyme catalyses orotidine 5'-phosphate + H(+) = UMP + CO2. The protein operates within pyrimidine metabolism; UMP biosynthesis via de novo pathway; UMP from orotate: step 2/2. Catalyzes the decarboxylation of orotidine 5'-monophosphate (OMP) to uridine 5'-monophosphate (UMP). This Vibrio parahaemolyticus serotype O3:K6 (strain RIMD 2210633) protein is Orotidine 5'-phosphate decarboxylase.